Consider the following 342-residue polypeptide: 4-hydroxythreonine-4-phosphate dehydrogenase (342 aa).

Substrate-binding residues include H139 and T140. A divalent metal cation contacts are provided by H174, H219, and H274. K282, N291, and R300 together coordinate substrate.

The protein belongs to the PdxA family. As to quaternary structure, homodimer. The cofactor is Zn(2+). Requires Mg(2+) as cofactor. Co(2+) is required as a cofactor.

The protein localises to the cytoplasm. The enzyme catalyses 4-(phosphooxy)-L-threonine + NAD(+) = 3-amino-2-oxopropyl phosphate + CO2 + NADH. The protein operates within cofactor biosynthesis; pyridoxine 5'-phosphate biosynthesis; pyridoxine 5'-phosphate from D-erythrose 4-phosphate: step 4/5. Catalyzes the NAD(P)-dependent oxidation of 4-(phosphooxy)-L-threonine (HTP) into 2-amino-3-oxo-4-(phosphooxy)butyric acid which spontaneously decarboxylates to form 3-amino-2-oxopropyl phosphate (AHAP). This Mesorhizobium japonicum (strain LMG 29417 / CECT 9101 / MAFF 303099) (Mesorhizobium loti (strain MAFF 303099)) protein is 4-hydroxythreonine-4-phosphate dehydrogenase.